The following is a 444-amino-acid chain: Phosphoglucosamine mutase (444 aa).

Residue serine 102 is the Phosphoserine intermediate of the active site. Positions 102, 241, 243, and 245 each coordinate Mg(2+). Residue serine 102 is modified to Phosphoserine.

The protein belongs to the phosphohexose mutase family. The cofactor is Mg(2+). Activated by phosphorylation.

It carries out the reaction alpha-D-glucosamine 1-phosphate = D-glucosamine 6-phosphate. Functionally, catalyzes the conversion of glucosamine-6-phosphate to glucosamine-1-phosphate. This chain is Phosphoglucosamine mutase, found in Pasteurella multocida (strain Pm70).